The primary structure comprises 908 residues: SKI/DACH domain-containing protein 1 (908 aa).

Residues 337–353 (HHHHHHHHHHHHHHHRA) show a composition bias toward basic residues. The tract at residues 337-461 (HHHHHHHHHH…SSSGSSQVSV (125 aa)) is disordered. Composition is skewed to low complexity over residues 370 to 389 (PHLG…SSYS) and 396 to 410 (SDFG…NSVS). Over residues 411–429 (SEEEEEEGEEEEEEEEEEG) the composition is skewed to acidic residues. Low complexity predominate over residues 449 to 461 (ESDSSSGSSQVSV). K688 is covalently cross-linked (Glycyl lysine isopeptide (Lys-Gly) (interchain with G-Cter in SUMO2)). 2 disordered regions span residues 744-763 (ETPS…TLGS) and 792-818 (LQTP…TNEG). A compositionally biased stretch (polar residues) spans 746–761 (PSLNPLAQSQGLSCTL).

Belongs to the DACH/dachshund family.

This Homo sapiens (Human) protein is SKI/DACH domain-containing protein 1 (SKIDA1).